We begin with the raw amino-acid sequence, 100 residues long: Small ribosomal subunit protein uS14c (100 aa).

The protein belongs to the universal ribosomal protein uS14 family. Part of the 30S ribosomal subunit.

It is found in the plastid. The protein resides in the chloroplast. In terms of biological role, binds 16S rRNA, required for the assembly of 30S particles. The sequence is that of Small ribosomal subunit protein uS14c from Pyropia yezoensis (Susabi-nori).